Consider the following 161-residue polypeptide: Crossover junction endodeoxyribonuclease RuvC (161 aa).

Catalysis depends on residues Asp7, Glu67, and Asp139. The Mg(2+) site is built by Asp7, Glu67, and Asp139.

It belongs to the RuvC family. In terms of assembly, homodimer which binds Holliday junction (HJ) DNA. The HJ becomes 2-fold symmetrical on binding to RuvC with unstacked arms; it has a different conformation from HJ DNA in complex with RuvA. In the full resolvosome a probable DNA-RuvA(4)-RuvB(12)-RuvC(2) complex forms which resolves the HJ. Mg(2+) is required as a cofactor.

Its subcellular location is the cytoplasm. It catalyses the reaction Endonucleolytic cleavage at a junction such as a reciprocal single-stranded crossover between two homologous DNA duplexes (Holliday junction).. Its function is as follows. The RuvA-RuvB-RuvC complex processes Holliday junction (HJ) DNA during genetic recombination and DNA repair. Endonuclease that resolves HJ intermediates. Cleaves cruciform DNA by making single-stranded nicks across the HJ at symmetrical positions within the homologous arms, yielding a 5'-phosphate and a 3'-hydroxyl group; requires a central core of homology in the junction. The consensus cleavage sequence is 5'-(A/T)TT(C/G)-3'. Cleavage occurs on the 3'-side of the TT dinucleotide at the point of strand exchange. HJ branch migration catalyzed by RuvA-RuvB allows RuvC to scan DNA until it finds its consensus sequence, where it cleaves and resolves the cruciform DNA. This chain is Crossover junction endodeoxyribonuclease RuvC, found in Syntrophotalea carbinolica (strain DSM 2380 / NBRC 103641 / GraBd1) (Pelobacter carbinolicus).